Here is a 356-residue protein sequence, read N- to C-terminus: Putative [LysW]-L-2-aminoadipate/[LysW]-L-glutamate phosphate reductase (356 aa).

Residue 11-14 (SGYT) coordinates NADP(+). C157 is a catalytic residue. Residue N323 participates in NADP(+) binding.

It belongs to the NAGSA dehydrogenase family. Type 1 subfamily. LysY sub-subfamily.

The protein resides in the cytoplasm. It catalyses the reaction [amino-group carrier protein]-C-terminal-N-(1-carboxy-5-oxopentan-1-yl)-L-glutamine + phosphate + NADP(+) = [amino-group carrier protein]-C-terminal-N-(1-carboxy-5-phosphooxy-5-oxopentan-1-yl)-L-glutamine + NADPH + H(+). The catalysed reaction is [amino-group carrier protein]-C-terminal-gamma-(L-glutamyl-5-semialdehyde)-L-glutamate + phosphate + NADP(+) = [amino-group carrier protein]-C-terminal-gamma-(5-phospho-L-glutamyl)-L-glutamate + NADPH + H(+). Its pathway is amino-acid biosynthesis; L-lysine biosynthesis via AAA pathway; L-lysine from L-alpha-aminoadipate (Thermus route): step 3/5. It functions in the pathway amino-acid biosynthesis; L-arginine biosynthesis. Involved in both the arginine and lysine biosynthetic pathways. The protein is Putative [LysW]-L-2-aminoadipate/[LysW]-L-glutamate phosphate reductase of Ignicoccus hospitalis (strain KIN4/I / DSM 18386 / JCM 14125).